The following is a 378-amino-acid chain: Putative glutamate--cysteine ligase 2 (378 aa).

Belongs to the glutamate--cysteine ligase type 2 family. YbdK subfamily.

The enzyme catalyses L-cysteine + L-glutamate + ATP = gamma-L-glutamyl-L-cysteine + ADP + phosphate + H(+). ATP-dependent carboxylate-amine ligase which exhibits weak glutamate--cysteine ligase activity. This is Putative glutamate--cysteine ligase 2 from Bdellovibrio bacteriovorus (strain ATCC 15356 / DSM 50701 / NCIMB 9529 / HD100).